The sequence spans 170 residues: Cysteine-rich venom protein VAR4 (170 aa).

An N-terminal signal peptide occupies residues 1 to 22 (MILLKLYLTLAAILCQSRGTTS). The 129-residue stretch at 41–169 (NKHNDLRRTV…PLKYFLVCQY (129 aa)) folds into the SCP domain. Disulfide bonds link Cys77–Cys156, Cys95–Cys170, and Cys151–Cys167.

The protein belongs to the CRISP family. Contains 8 disulfide bonds. Expressed by the venom gland.

The protein resides in the secreted. Blocks ryanodine receptors, and potassium channels. The polypeptide is Cysteine-rich venom protein VAR4 (Varanus acanthurus (Ridge-tailed monitor)).